Consider the following 726-residue polypeptide: Catalase-peroxidase (726 aa).

Residues methionine 1 to serine 33 are disordered. The segment at residues tryptophan 105 to tyrosine 226 is a cross-link (tryptophyl-tyrosyl-methioninium (Trp-Tyr) (with M-252)). Histidine 106 acts as the Proton acceptor in catalysis. The segment at residues tyrosine 226–methionine 252 is a cross-link (tryptophyl-tyrosyl-methioninium (Tyr-Met) (with W-105)). Histidine 267 is a heme b binding site.

This sequence belongs to the peroxidase family. Peroxidase/catalase subfamily. Homodimer or homotetramer. Heme b serves as cofactor. Post-translationally, formation of the three residue Trp-Tyr-Met cross-link is important for the catalase, but not the peroxidase activity of the enzyme.

The enzyme catalyses H2O2 + AH2 = A + 2 H2O. It carries out the reaction 2 H2O2 = O2 + 2 H2O. In terms of biological role, bifunctional enzyme with both catalase and broad-spectrum peroxidase activity. This Salmonella typhi protein is Catalase-peroxidase.